The chain runs to 626 residues: MMANDAKPDVKTVQVLRDTANRLRIHSIRATCASGSGQLTSCCSAAEVVSVLFFHTMKYKQTDPEHPDNDRFILSRGHAAPILYAAWVEVGDISESDLLNLRKLHSDLERHPTPRLPFVDVATGSLGQGLGTACGMAYTGKYLDKASYRVFCLMGDGESSEGSVWEAFAFASHYNLDNLVAVFDVNRLGQSGPAPLEHGADIYQNCCEAFGWNTYLVDGHDVEALCQAFWQASQVKNKPTAIVAKTFKGRGIPNIEDAENWHGKPVPKERADAIVKLIESQIQTNENLIPKSPVEDSPQISITDIKMTSPPAYKVGDKIATQKTYGLALAKLGRANERVIVLSGDTMNSTFSEIFRKEHPERFIECIIAEQNMVSVALGCATRGRTIAFAGAFAAFFTRAFDQLRMGAISQANINLIGSHCGVSTGEDGVSQMALEDLAMFRSIPNCTVFYPSDAISTEHAIYLAANTKGMCFIRTSQPETAVIYTPQENFEIGQAKVVRHGVNDKVTVIGAGVTLHEALEAADHLSQQGISVRVIDPFTIKPLDAATIISSAKATGGRVITVEDHYREGGIGEAVCAAVSREPDILVHQLAVSGVPQRGKTSELLDMFGISTRHIIAAVTLTLMK.

Residues Ser41, His78, and Gly124–Leu126 each bind thiamine diphosphate. Asp156 contributes to the Mg(2+) binding site. Gly157 and Asn186 together coordinate thiamine diphosphate. 2 residues coordinate Mg(2+): Asn186 and Leu188. Thiamine diphosphate contacts are provided by Lys248 and His262. His262 and Ser349 together coordinate substrate. 2 residues coordinate thiamine diphosphate: Glu370 and Phe396. Glu370 (proton donor) is an active-site residue. Substrate is bound by residues His420 and Asp428. Gln432 serves as a coordination point for thiamine diphosphate.

The protein belongs to the transketolase family. As to quaternary structure, homodimer. Mg(2+) is required as a cofactor. It depends on Ca(2+) as a cofactor. The cofactor is Mn(2+). Co(2+) serves as cofactor. Requires thiamine diphosphate as cofactor. Overexpressed in hepatoma cancer cells.

The catalysed reaction is D-sedoheptulose 7-phosphate + D-glyceraldehyde 3-phosphate = aldehydo-D-ribose 5-phosphate + D-xylulose 5-phosphate. In terms of biological role, plays an essential role in total transketolase activity and cell proliferation in cancer cells; after transfection with anti-TKTL1 siRNA, total transketolase activity dramatically decreases and proliferation was significantly inhibited in cancer cells. Plays a pivotal role in carcinogenesis. The protein is Transketolase-like protein 2 (TKTL2) of Homo sapiens (Human).